The primary structure comprises 317 residues: Small ribosomal subunit protein RACK1 (317 aa).

7 WD repeats span residues 15 to 55, 64 to 103, 106 to 146, 148 to 188, 191 to 230, 232 to 272, and 281 to 317; these read GHNG…DNQY, GHSH…TTQR, GHKG…ATLT, HNDW…VNAD, GHTG…TLYT, EAKA…DELK, and AKDP…TPSA.

The protein belongs to the WD repeat G protein beta family. Ribosomal protein RACK1 subfamily. Component of the small ribosomal subunit. Mature ribosomes consist of a small (40S) and a large (60S) subunit. The 40S subunit contains about 32 different proteins and 1 molecule of RNA (18S). The 60S subunit contains 45 different proteins and 3 molecules of RNA (25S, 5.8S and 5S).

The protein resides in the cytoplasm. Functionally, component of the ribosome, a large ribonucleoprotein complex responsible for the synthesis of proteins in the cell. The small ribosomal subunit (SSU) binds messenger RNAs (mRNAs) and translates the encoded message by selecting cognate aminoacyl-transfer RNA (tRNA) molecules. The large subunit (LSU) contains the ribosomal catalytic site termed the peptidyl transferase center (PTC), which catalyzes the formation of peptide bonds, thereby polymerizing the amino acids delivered by tRNAs into a polypeptide chain. The nascent polypeptides leave the ribosome through a tunnel in the LSU and interact with protein factors that function in enzymatic processing, targeting, and the membrane insertion of nascent chains at the exit of the ribosomal tunnel. Located at the head of the 40S ribosomal subunit in the vicinity of the mRNA exit channel, it serves as a scaffold protein that can recruit other proteins to the ribosome. Involved in the negative regulation of translation of a specific subset of proteins. Plays a role in morphogenesis and pathogenesis. This Candida albicans (strain SC5314 / ATCC MYA-2876) (Yeast) protein is Small ribosomal subunit protein RACK1.